The following is a 39-amino-acid chain: Cytochrome b559 subunit beta (39 aa).

Residues 14–30 form a helical membrane-spanning segment; the sequence is WLAVHGLAVPTVFFLGS. His-18 serves as a coordination point for heme.

The protein belongs to the PsbE/PsbF family. In terms of assembly, heterodimer of an alpha subunit and a beta subunit. PSII is composed of 1 copy each of membrane proteins PsbA, PsbB, PsbC, PsbD, PsbE, PsbF, PsbH, PsbI, PsbJ, PsbK, PsbL, PsbM, PsbT, PsbX, PsbY, PsbZ, Psb30/Ycf12, at least 3 peripheral proteins of the oxygen-evolving complex and a large number of cofactors. It forms dimeric complexes. The cofactor is heme b.

The protein localises to the plastid. The protein resides in the chloroplast thylakoid membrane. This b-type cytochrome is tightly associated with the reaction center of photosystem II (PSII). PSII is a light-driven water:plastoquinone oxidoreductase that uses light energy to abstract electrons from H(2)O, generating O(2) and a proton gradient subsequently used for ATP formation. It consists of a core antenna complex that captures photons, and an electron transfer chain that converts photonic excitation into a charge separation. The protein is Cytochrome b559 subunit beta of Pinus koraiensis (Korean pine).